The primary structure comprises 367 residues: Chorismate synthase (367 aa).

Residue Arg-48 coordinates NADP(+). FMN is bound by residues 125–127, Gly-283, 298–302, and Arg-324; these read RSS and KPTPS.

Belongs to the chorismate synthase family. Homotetramer. FMNH2 is required as a cofactor.

It catalyses the reaction 5-O-(1-carboxyvinyl)-3-phosphoshikimate = chorismate + phosphate. It functions in the pathway metabolic intermediate biosynthesis; chorismate biosynthesis; chorismate from D-erythrose 4-phosphate and phosphoenolpyruvate: step 7/7. Its function is as follows. Catalyzes the anti-1,4-elimination of the C-3 phosphate and the C-6 proR hydrogen from 5-enolpyruvylshikimate-3-phosphate (EPSP) to yield chorismate, which is the branch point compound that serves as the starting substrate for the three terminal pathways of aromatic amino acid biosynthesis. This reaction introduces a second double bond into the aromatic ring system. The protein is Chorismate synthase of Agathobacter rectalis (strain ATCC 33656 / DSM 3377 / JCM 17463 / KCTC 5835 / VPI 0990) (Eubacterium rectale).